Here is a 654-residue protein sequence, read N- to C-terminus: Fructose-1,6-bisphosphatase class 3 (654 aa).

Belongs to the FBPase class 3 family. The cofactor is Mn(2+).

The enzyme catalyses beta-D-fructose 1,6-bisphosphate + H2O = beta-D-fructose 6-phosphate + phosphate. Its pathway is carbohydrate biosynthesis; gluconeogenesis. This Staphylococcus haemolyticus (strain JCSC1435) protein is Fructose-1,6-bisphosphatase class 3.